A 555-amino-acid chain; its full sequence is Urocanate hydratase (555 aa).

NAD(+)-binding positions include 52–53 (GG), Q130, 176–178 (GMG), E196, R201, 242–243 (NA), 263–267 (QTSAH), 273–274 (YL), and Y322. Residue C410 is part of the active site. G492 provides a ligand contact to NAD(+).

The protein belongs to the urocanase family. Requires NAD(+) as cofactor.

Its subcellular location is the cytoplasm. It carries out the reaction 4-imidazolone-5-propanoate = trans-urocanate + H2O. It functions in the pathway amino-acid degradation; L-histidine degradation into L-glutamate; N-formimidoyl-L-glutamate from L-histidine: step 2/3. Catalyzes the conversion of urocanate to 4-imidazolone-5-propionate. This chain is Urocanate hydratase, found in Shewanella putrefaciens (strain CN-32 / ATCC BAA-453).